Consider the following 451-residue polypeptide: Subtilase-type proteinase psp3 (451 aa).

The N-terminal stretch at 1-20 (MRVSWISGLLLVAHLAPSSA) is a signal peptide. One can recognise an Inhibitor I9 domain in the interval 80-161 (YIVMFKPSVD…LVEPDRVMHV (82 aa)). The region spanning 169-451 (PWGLARVSHR…PNVLAFNNYE (283 aa)) is the Peptidase S8 domain. Active-site charge relay system residues include Asp205, His237, and Ser394.

The protein belongs to the peptidase S8 family.

The chain is Subtilase-type proteinase psp3 (psp3) from Schizosaccharomyces pombe (strain 972 / ATCC 24843) (Fission yeast).